A 245-amino-acid chain; its full sequence is Peroxisome biogenesis protein 19-2 (245 aa).

A disordered region spans residues Ala17–Ser106. Composition is skewed to basic and acidic residues over residues Val33–Glu44 and Ala71–Lys92. The segment covering Ser96–Gly105 has biased composition (polar residues). Cysteine methyl ester is present on Cys242. The S-farnesyl cysteine moiety is linked to residue Cys242. The propeptide at Cys243–Met245 is removed in mature form.

The protein belongs to the peroxin-19 family. Dimer. Interacts with PEX10 (via C-terminus). Post-translationally, may be farnesylated. Expressed in roots, leaves, flowers, siliques and stems. Highest expression in roots and leaves.

It localises to the cytoplasm. The protein resides in the peroxisome membrane. Functionally, contributes to morphology determination of peroxisomes, but not to import of peroxisomal matrix proteins. Required for proper post-translational import and stabilization of peroxisomal membrane proteins (PMPs). Acts as a cytosolic import receptor for PMPs and delivers them to the docking factor PEX3 at the peroxisomal membrane for subsequent insertion into the membrane. Acts as a chaperone in stabilizing or maintaining PMPs in the lipid bilayer. In Arabidopsis thaliana (Mouse-ear cress), this protein is Peroxisome biogenesis protein 19-2 (PEX19-2).